Reading from the N-terminus, the 443-residue chain is tRNA(Ile2) 2-agmatinylcytidine synthetase TiaS (443 aa).

The protein belongs to the TiaS family.

It is found in the cytoplasm. It carries out the reaction cytidine(34) in tRNA(Ile2) + agmatine + ATP + H2O = 2-agmatinylcytidine(34) in tRNA(Ile2) + AMP + 2 phosphate + 2 H(+). In terms of biological role, ATP-dependent agmatine transferase that catalyzes the formation of 2-agmatinylcytidine (agm2C) at the wobble position (C34) of tRNA(Ile2), converting the codon specificity from AUG to AUA. The protein is tRNA(Ile2) 2-agmatinylcytidine synthetase TiaS of Saccharolobus islandicus (strain L.S.2.15 / Lassen #1) (Sulfolobus islandicus).